Reading from the N-terminus, the 464-residue chain is D-inositol 3-phosphate glycosyltransferase (464 aa).

The segment covering 1-20 has biased composition (basic and acidic residues); the sequence is MEGAPRRPDRHARSEEERHV. The interval 1-44 is disordered; it reads MEGAPRRPDRHARSEEERHVSQYASRLGRRSPAAPTRRRMLRKP. His53 lines the 1D-myo-inositol 3-phosphate pocket. Residues 59–60 and Gly67 contribute to the UDP-N-acetyl-alpha-D-glucosamine site; that span reads QP. Residues 64-69, Lys122, Tyr155, Thr179, and Arg199 each bind 1D-myo-inositol 3-phosphate; that span reads DAGGMN. UDP-N-acetyl-alpha-D-glucosamine is bound by residues Arg274, Lys279, and Val340. Positions 349, 350, and 352 each coordinate Mg(2+). UDP-N-acetyl-alpha-D-glucosamine contacts are provided by Glu362 and Glu370. Residue Thr376 coordinates Mg(2+).

It belongs to the glycosyltransferase group 1 family. MshA subfamily. Homodimer.

The catalysed reaction is 1D-myo-inositol 3-phosphate + UDP-N-acetyl-alpha-D-glucosamine = 1D-myo-inositol 2-acetamido-2-deoxy-alpha-D-glucopyranoside 3-phosphate + UDP + H(+). Its function is as follows. Catalyzes the transfer of a N-acetyl-glucosamine moiety to 1D-myo-inositol 3-phosphate to produce 1D-myo-inositol 2-acetamido-2-deoxy-glucopyranoside 3-phosphate in the mycothiol biosynthesis pathway. The sequence is that of D-inositol 3-phosphate glycosyltransferase from Streptomyces avermitilis (strain ATCC 31267 / DSM 46492 / JCM 5070 / NBRC 14893 / NCIMB 12804 / NRRL 8165 / MA-4680).